Consider the following 342-residue polypeptide: tRNA (guanine(26)-N(2))-dimethyltransferase (342 aa).

The 336-residue stretch at Met1–Leu336 folds into the Trm1 methyltransferase domain. 3 residues coordinate S-adenosyl-L-methionine: Arg35, Arg60, and Glu76.

This sequence belongs to the class I-like SAM-binding methyltransferase superfamily. Trm1 family.

The catalysed reaction is guanosine(26) in tRNA + 2 S-adenosyl-L-methionine = N(2)-dimethylguanosine(26) in tRNA + 2 S-adenosyl-L-homocysteine + 2 H(+). In terms of biological role, dimethylates a single guanine residue at position 26 of a number of tRNAs using S-adenosyl-L-methionine as donor of the methyl groups. This Thermoplasma volcanium (strain ATCC 51530 / DSM 4299 / JCM 9571 / NBRC 15438 / GSS1) protein is tRNA (guanine(26)-N(2))-dimethyltransferase.